We begin with the raw amino-acid sequence, 256 residues long: Gamma carbonic anhydrase-like 2, mitochondrial (256 aa).

A mitochondrion-targeting transit peptide spans 1 to 33 (MATSLARISKRSITSAVSSNLIRRYFAAEAVAV). Residues 103-105 (RGD) and 118-119 (QE) each bind substrate. Position 124 (His124) interacts with Zn(2+). Arg152, Gln164, and Tyr231 together coordinate substrate.

Belongs to the gamma-class carbonic anhydrase family. In terms of assembly, component of the mitochondrial oxidoreductase respiratory chain complex I; element of the extra matrix-exposed domain, which is attached to the membrane arm of this complex. Interacts with GAMMACA2.

The protein localises to the mitochondrion membrane. Its function is as follows. Involved in complex I assembly in mitochondria and respiration. This is Gamma carbonic anhydrase-like 2, mitochondrial (GAMMACAL2) from Arabidopsis thaliana (Mouse-ear cress).